Here is a 388-residue protein sequence, read N- to C-terminus: Formate-dependent phosphoribosylglycinamide formyltransferase (388 aa).

N(1)-(5-phospho-beta-D-ribosyl)glycinamide contacts are provided by residues 20 to 21 (EL) and E80. Residues R112, K153, 158–163 (SSGKGQ), 193–196 (EEFI), and E201 contribute to the ATP site. Residues 117–306 (RLAFEKLGLR…EFEIHARAIL (190 aa)) enclose the ATP-grasp domain. Residues E265 and E277 each coordinate Mg(2+). N(1)-(5-phospho-beta-D-ribosyl)glycinamide contacts are provided by residues D284, K352, and 359 to 360 (RR).

It belongs to the PurK/PurT family. Homodimer.

The enzyme catalyses N(1)-(5-phospho-beta-D-ribosyl)glycinamide + formate + ATP = N(2)-formyl-N(1)-(5-phospho-beta-D-ribosyl)glycinamide + ADP + phosphate + H(+). Its pathway is purine metabolism; IMP biosynthesis via de novo pathway; N(2)-formyl-N(1)-(5-phospho-D-ribosyl)glycinamide from N(1)-(5-phospho-D-ribosyl)glycinamide (formate route): step 1/1. Involved in the de novo purine biosynthesis. Catalyzes the transfer of formate to 5-phospho-ribosyl-glycinamide (GAR), producing 5-phospho-ribosyl-N-formylglycinamide (FGAR). Formate is provided by PurU via hydrolysis of 10-formyl-tetrahydrofolate. The chain is Formate-dependent phosphoribosylglycinamide formyltransferase from Methanococcus maripaludis (strain DSM 14266 / JCM 13030 / NBRC 101832 / S2 / LL).